An 81-amino-acid polypeptide reads, in one-letter code: Photosystem I iron-sulfur center (81 aa).

4Fe-4S ferredoxin-type domains lie at 2–31 and 39–68; these read SHAV…MVPW and IAAS…IRVY. Residues Cys11, Cys14, Cys17, Cys21, Cys48, Cys51, Cys54, and Cys58 each contribute to the [4Fe-4S] cluster site.

As to quaternary structure, the cyanobacterial PSI reaction center is composed of one copy each of PsaA,B,C,D,E,F,I,J,K,L,M and X, and forms trimeric complexes. The cofactor is [4Fe-4S] cluster.

It localises to the cellular thylakoid membrane. The catalysed reaction is reduced [plastocyanin] + hnu + oxidized [2Fe-2S]-[ferredoxin] = oxidized [plastocyanin] + reduced [2Fe-2S]-[ferredoxin]. Its function is as follows. Apoprotein for the two 4Fe-4S centers FA and FB of photosystem I (PSI); essential for photochemical activity. FB is the terminal electron acceptor of PSI, donating electrons to ferredoxin. The C-terminus interacts with PsaA/B/D and helps assemble the protein into the PSI complex. Required for binding of PsaD and PsaE to PSI. PSI is a plastocyanin/cytochrome c6-ferredoxin oxidoreductase, converting photonic excitation into a charge separation, which transfers an electron from the donor P700 chlorophyll pair to the spectroscopically characterized acceptors A0, A1, FX, FA and FB in turn. In Prochlorococcus marinus (strain MIT 9303), this protein is Photosystem I iron-sulfur center.